We begin with the raw amino-acid sequence, 578 residues long: Asparagine synthetase [glutamine-hydrolyzing] 3 (578 aa).

Cysteine 2 serves as the catalytic For GATase activity. One can recognise a Glutamine amidotransferase type-2 domain in the interval 2–185 (CGILAVLGCV…PGHIYSSKQG (184 aa)). Residues 50-54 (RLAIV), 75-77 (NGE), and aspartate 98 each bind L-glutamine. The Asparagine synthetase domain occupies 210–450 (VRNTFEKAVI…LPKHILYRQK (241 aa)). ATP is bound by residues leucine 231, isoleucine 267, and 341-342 (SG). Residues 555-572 (GEDKTEDSRPEKLQKLAE) show a composition bias toward basic and acidic residues. Positions 555–578 (GEDKTEDSRPEKLQKLAEKTPAIV) are disordered.

The enzyme catalyses L-aspartate + L-glutamine + ATP + H2O = L-asparagine + L-glutamate + AMP + diphosphate + H(+). It participates in amino-acid biosynthesis; L-asparagine biosynthesis. Its function is as follows. Essential for nitrogen assimilation, distribution and remobilization within the plant via the phloem. The protein is Asparagine synthetase [glutamine-hydrolyzing] 3 (ASN3) of Arabidopsis thaliana (Mouse-ear cress).